The following is a 1685-amino-acid chain: Collagen alpha-5(IV) chain (1685 aa).

An N-terminal signal peptide occupies residues 1–26; that stretch reads MKLRGVSLAAGLFLLALSLWGQPAEA. The nonhelical region (NC2) stretch occupies residues 27-41; sequence AACYGCSPGSKCDCS. The segment at 42 to 1456 is triple-helical region; the sequence is GIKGEKGERG…QGPPGPPGTS (1415 aa). The disordered stretch occupies residues 49–1459; it reads ERGFPGLEGH…PGPPGTSSVA (1411 aa). A compositionally biased stretch (low complexity) spans 52–61; the sequence is FPGLEGHPGL. Over residues 62–73 the composition is skewed to pro residues; sequence PGFPGPEGPPGP. N-linked (GlcNAc...) asparagine glycosylation occurs at asparagine 125. Positions 188–212 are enriched in pro residues; that stretch reads TGIPGPIGPPGPPGLMGPPGPPGLP. Over residues 214–225 the composition is skewed to low complexity; sequence PKGNMGLNFQGP. Basic and acidic residues predominate over residues 246-257; sequence EQKRPIDVEFQK. The span at 266-281 shows a compositional bias: pro residues; the sequence is RGPPGPPGIRGPPGPP. Basic and acidic residues-rich tracts occupy residues 284-305 and 324-333; these read EKGE…KDGE and PGRDGEKGQK. The span at 413–430 shows a compositional bias: low complexity; sequence PPGISIPGPPGLDGQPGA. Pro residues-rich tracts occupy residues 431–445, 493–505, 620–630, and 709–727; these read PGLP…PHIP, PGQP…PGPP, MGPPGFGPPGP, and PGPP…PGAP. Positions 788–797 are enriched in low complexity; the sequence is RTGLDGLPGP. Pro residues-rich tracts occupy residues 848–859 and 868–880; these read PGPPGLDVPGPP and PGAP…PGSP. Composition is skewed to low complexity over residues 882 to 901, 912 to 931, 983 to 999, 1010 to 1026, and 1111 to 1120; these read LPGK…MGMM, IPGR…QGQP, YQGL…SGQP, NPGL…PGLK, and TPGAKGQPGL. A compositionally biased stretch (pro residues) spans 1139-1148; that stretch reads PGNPGLPGEP. Gly residues-rich tracts occupy residues 1149-1158 and 1202-1211; these read GPVGGGGHPG and GQKGDGGLPG. Pro residues-rich tracts occupy residues 1234–1243 and 1256–1274; these read QGPPGPPGSP and PQGP…PPGL. Low complexity predominate over residues 1295-1308; the sequence is LPGLKGDQGPPGLQ. Residues 1353–1362 show a composition bias toward pro residues; sequence IGPPGPPGLP. Residues 1461–1685 enclose the Collagen IV NC1 domain; it reads GFLITRHSQT…SRCQVCMKRT (225 aa). 6 disulfide bridges follow: cysteine 1476-cysteine 1567, cysteine 1509-cysteine 1564, cysteine 1521-cysteine 1527, cysteine 1586-cysteine 1681, cysteine 1620-cysteine 1678, and cysteine 1632-cysteine 1638. Residue methionine 1549 forms an S-Lysyl-methionine sulfilimine (Met-Lys) (interchain with K-1667) linkage. Lysine 1667 is covalently cross-linked (S-Lysyl-methionine sulfilimine (Lys-Met) (interchain with M-1549)).

The protein belongs to the type IV collagen family. As to quaternary structure, there are six type IV collagen isoforms, alpha 1(IV)-alpha 6(IV), each of which can form a triple helix structure with 2 other chains to generate type IV collagen network. Post-translationally, prolines at the third position of the tripeptide repeating unit (G-X-Y) are hydroxylated in some or all of the chains. In terms of processing, type IV collagens contain numerous cysteine residues which are involved in inter- and intramolecular disulfide bonding. 12 of these, located in the NC1 domain, are conserved in all known type IV collagens. The trimeric structure of the NC1 domains is stabilized by covalent bonds between Lys and Met residues. In terms of tissue distribution, isoform 2 is found in kidney.

The protein localises to the secreted. Its subcellular location is the extracellular space. The protein resides in the extracellular matrix. It is found in the basement membrane. Its function is as follows. Type IV collagen is the major structural component of glomerular basement membranes (GBM), forming a 'chicken-wire' meshwork together with laminins, proteoglycans and entactin/nidogen. The sequence is that of Collagen alpha-5(IV) chain (COL4A5) from Homo sapiens (Human).